Here is a 215-residue protein sequence, read N- to C-terminus: Somatotropin (215 aa).

Residues 1–25 (MAPGMRVCLLLLIAFTLLGPQRAAA) form the signal peptide. Position 44 (H44) interacts with Zn(2+). At S130 the chain carries Phosphoserine. E197 contributes to the Zn(2+) binding site.

This sequence belongs to the somatotropin/prolactin family.

The protein resides in the secreted. In terms of biological role, plays an important role in growth control. Its major role in stimulating body growth is to stimulate the liver and other tissues to secrete IGF1. It stimulates both the differentiation and proliferation of myoblasts. It also stimulates amino acid uptake and protein synthesis in muscle and other tissues. The chain is Somatotropin (GH1) from Monodelphis domestica (Gray short-tailed opossum).